We begin with the raw amino-acid sequence, 111 residues long: Fluoride-specific ion channel FluC (111 aa).

3 helical membrane passes run 2 to 22, 36 to 56, and 71 to 91; these read GLLL…RFAL, GILL…AFLI, and FLLV…SLDI. Na(+) contacts are provided by Gly-79 and Thr-82.

Belongs to the fluoride channel Fluc/FEX (TC 1.A.43) family.

It localises to the cell inner membrane. The enzyme catalyses fluoride(in) = fluoride(out). Na(+) is not transported, but it plays an essential structural role and its presence is essential for fluoride channel function. Fluoride-specific ion channel. Important for reducing fluoride concentration in the cell, thus reducing its toxicity. This Francisella tularensis subsp. holarctica (strain FTNF002-00 / FTA) protein is Fluoride-specific ion channel FluC.